The primary structure comprises 1133 residues: Roquin-1 (1133 aa).

Residues Cys14, Cys17, Cys33, His35, Cys38, Cys50, and Asp53 each coordinate Zn(2+). The segment at 14–54 (CPICTQTFDETIRKPISLGCGHTVCKMCLNKLHRKACPFDQ) adopts an RING-type; degenerate zinc-finger fold. Residues 89–173 (GVEDTKHYEE…RTVTELILQH (85 aa)) are HEPN-N. An ROQ region spans residues 174–326 (QNPQQLSSNL…MQSIIDKLQT (153 aa)). An HEPN-C region spans residues 327 to 396 (PASFAQSVQE…VVHGLVDYIQ (70 aa)). The C3H1-type zinc finger occupies 413-441 (KYKTYMCRDMKQRGGCPRGASCTFAHSQE). 4 positions are modified to phosphoserine: Ser462, Ser531, Ser535, and Ser863. The segment at 505 to 542 (TQLIPRGTDPSYDSSLKPGKIDHLSSSAPGSPPDLLES) is disordered. Disordered regions lie at residues 1000 to 1019 (NTLAGQSQPPPPPPPKWPGM), 1058 to 1078 (NTSKQAENGQPEPQNKVPAED), and 1094 to 1133 (QENISLLSNKTSSLNLSEDPEGGGDNNDSQRSGVTPSSAP). Pro residues predominate over residues 1007 to 1016 (QPPPPPPPKW). Over residues 1058-1070 (NTSKQAENGQPEP) the composition is skewed to polar residues. The span at 1096–1110 (NISLLSNKTSSLNLS) shows a compositional bias: low complexity. Residue Ser1110 is modified to Phosphoserine. Residues 1119–1133 (NNDSQRSGVTPSSAP) show a composition bias toward polar residues.

As to quaternary structure, able to homodimerize. Interacts with DDX6 and EDC4. Interacts with CCR4-NOT deadenylase complex. Interacts with RC3H1; the interaction is RNA independent. In terms of processing, proteolytically cleaved after Arg-510 and Arg-579 by MALT1 in activated CD4(+) T cells; cleavage at Arg-510 and Arg-579 is critical for promoting RC3H1 degradation in response to T-cell receptor (TCR) stimulation, and hence is necessary for prolonging the stability of a set of mRNAs controlling Th17 cell differentiation. Widely expressed. Expressed at higher level in cerebellum, spleen, ovary and liver.

The protein localises to the cytoplasm. The protein resides in the P-body. Its subcellular location is the cytoplasmic granule. It carries out the reaction S-ubiquitinyl-[E2 ubiquitin-conjugating enzyme]-L-cysteine + [acceptor protein]-L-lysine = [E2 ubiquitin-conjugating enzyme]-L-cysteine + N(6)-ubiquitinyl-[acceptor protein]-L-lysine.. The protein operates within protein modification; protein ubiquitination. Functionally, post-transcriptional repressor of mRNAs containing a conserved stem loop motif, called constitutive decay element (CDE), which is often located in the 3'-UTR, as in HMGXB3, ICOS, IER3, NFKBID, NFKBIZ, PPP1R10, TNF, TNFRSF4 and in many more mRNAs. Cleaves translationally inactive mRNAs harboring a stem-loop (SL), often located in their 3'-UTRs, during the early phase of inflammation in a helicase UPF1-independent manner. Binds to CDE and promotes mRNA deadenylation and degradation. This process does not involve miRNAs. In follicular helper T (Tfh) cells, represses of ICOS and TNFRSF4 expression, thus preventing spontaneous Tfh cell differentiation, germinal center B-cell differentiation in the absence of immunization and autoimmunity. In resting or LPS-stimulated macrophages, controls inflammation by suppressing TNF expression. Also recognizes CDE in its own mRNA and in that of paralogous RC3H2, possibly leading to feedback loop regulation. Recognizes and binds mRNAs containing a hexaloop stem-loop motif, called alternative decay element (ADE). Together with ZC3H12A, destabilizes TNFRSF4/OX40 mRNA by binding to the conserved stem loop structure in its 3'UTR. Able to interact with double-stranded RNA (dsRNA). miRNA-binding protein that regulates microRNA homeostasis. Enhances DICER-mediated processing of pre-MIR146a but reduces mature MIR146a levels through an increase of 3' end uridylation. Both inhibits ICOS mRNA expression and they may act together to exert the suppression. Acts as a ubiquitin E3 ligase. Pairs with E2 enzymes UBE2A, UBE2B, UBE2D2, UBE2F, UBE2G1, UBE2G2 and UBE2L3 and produces polyubiquitin chains. Shows the strongest activity when paired with UBE2N:UBE2V1 or UBE2N:UBE2V2 E2 complexes and generate both short and long polyubiquitin chains. The protein is Roquin-1 of Homo sapiens (Human).